A 314-amino-acid polypeptide reads, in one-letter code: tRNA dimethylallyltransferase (314 aa).

Residue 10–17 (GPTAVGKT) participates in ATP binding. A substrate-binding site is contributed by 12–17 (TAVGKT). The segment at 35 to 38 (DSMQ) is interaction with substrate tRNA.

It belongs to the IPP transferase family. As to quaternary structure, monomer. It depends on Mg(2+) as a cofactor.

It carries out the reaction adenosine(37) in tRNA + dimethylallyl diphosphate = N(6)-dimethylallyladenosine(37) in tRNA + diphosphate. Functionally, catalyzes the transfer of a dimethylallyl group onto the adenine at position 37 in tRNAs that read codons beginning with uridine, leading to the formation of N6-(dimethylallyl)adenosine (i(6)A). In Clostridium novyi (strain NT), this protein is tRNA dimethylallyltransferase.